The sequence spans 108 residues: Large ribosomal subunit protein uL24 (108 aa).

The protein belongs to the universal ribosomal protein uL24 family. As to quaternary structure, part of the 50S ribosomal subunit.

One of two assembly initiator proteins, it binds directly to the 5'-end of the 23S rRNA, where it nucleates assembly of the 50S subunit. Its function is as follows. One of the proteins that surrounds the polypeptide exit tunnel on the outside of the subunit. The polypeptide is Large ribosomal subunit protein uL24 (Desulfosudis oleivorans (strain DSM 6200 / JCM 39069 / Hxd3) (Desulfococcus oleovorans)).